We begin with the raw amino-acid sequence, 104 residues long: Large ribosomal subunit protein uL24 (104 aa).

This sequence belongs to the universal ribosomal protein uL24 family. As to quaternary structure, part of the 50S ribosomal subunit.

In terms of biological role, one of two assembly initiator proteins, it binds directly to the 5'-end of the 23S rRNA, where it nucleates assembly of the 50S subunit. Its function is as follows. One of the proteins that surrounds the polypeptide exit tunnel on the outside of the subunit. In Methylobacterium radiotolerans (strain ATCC 27329 / DSM 1819 / JCM 2831 / NBRC 15690 / NCIMB 10815 / 0-1), this protein is Large ribosomal subunit protein uL24.